A 148-amino-acid polypeptide reads, in one-letter code: Glutaredoxin-C10 (148 aa).

The disordered stretch occupies residues 16–55 (TLDLTVHPPPPPPLPPPAPSTVSSSTASTSLSFDEEETSE). A compositionally biased stretch (pro residues) spans 22–34 (HPPPPPPLPPPAP). Residues 35–47 (STVSSSTASTSLS) show a composition bias toward low complexity. In terms of domain architecture, Glutaredoxin spans 55–147 (ESKIGRLISE…PRLVEVGALW (93 aa)). Cys-76 and Cys-79 are oxidised to a cystine.

It belongs to the glutaredoxin family. CC-type subfamily.

It localises to the cytoplasm. In terms of biological role, has a glutathione-disulfide oxidoreductase activity in the presence of NADPH and glutathione reductase. Reduces low molecular weight disulfides and proteins. The polypeptide is Glutaredoxin-C10 (GRXC10) (Arabidopsis thaliana (Mouse-ear cress)).